A 92-amino-acid chain; its full sequence is Isoleucine--tRNA ligase (92 aa).

Residues C55, C58, C75, and C78 each coordinate Zn(2+).

This sequence belongs to the class-I aminoacyl-tRNA synthetase family. IleS type 1 subfamily. As to quaternary structure, monomer. It depends on Zn(2+) as a cofactor.

The protein localises to the cytoplasm. It catalyses the reaction tRNA(Ile) + L-isoleucine + ATP = L-isoleucyl-tRNA(Ile) + AMP + diphosphate. Its function is as follows. Catalyzes the attachment of isoleucine to tRNA(Ile). As IleRS can inadvertently accommodate and process structurally similar amino acids such as valine, to avoid such errors it has two additional distinct tRNA(Ile)-dependent editing activities. One activity is designated as 'pretransfer' editing and involves the hydrolysis of activated Val-AMP. The other activity is designated 'posttransfer' editing and involves deacylation of mischarged Val-tRNA(Ile). The protein is Isoleucine--tRNA ligase (ileS) of Klebsiella aerogenes (Enterobacter aerogenes).